Reading from the N-terminus, the 343-residue chain is Protein SOSEKI 4 (343 aa).

A DIX-like oligomerization domain region spans residues 18–109 (RIVPVVYYLS…YVLKGSQILD (92 aa)). The interval 148-194 (RKLSMDASTQTDDRRRRKSPVDEVNEVTELSREEITSPPQSDSSPET) is disordered. Residues 184–194 (SPPQSDSSPET) show a composition bias toward polar residues. An Association to cell membranes motif is present at residues 233–234 (CG).

The protein belongs to the SOSEKI family. In terms of assembly, homodimer. Forms long polymer filaments with other SOKs proteins polymers (e.g. SOK1, SOK2, SOK3 and SOK4) crucial for polar localization and biological activity. Binds to ANGUSTIFOLIA (AN). As to expression, expressed during embryogenesis and in roots.

It localises to the cell membrane. SOSEKI proteins (SOK1-5) locally interpret global polarity cues and can influence cell division orientation to coordinate cell polarization relative to body axes, probably by guiding ANGUSTIFOLIA (AN) polarized localization. Positive regulator of auxin (indole-3-acetic acid, IAA) biosynthesis and signaling pathway leading to the modulation of seedling growth, plant and inflorescence development. Negative regulator of stress responses (e.g. salinity and osmotic stress). This chain is Protein SOSEKI 4, found in Arabidopsis thaliana (Mouse-ear cress).